The chain runs to 132 residues: Pre-histone-like nucleoprotein (132 aa).

The propeptide occupies 2 to 23; that stretch reads AILISPSNNTGWGLGTHKLFGG. The Nuclear localization signal motif lies at 124–132; sequence RRKRRVRSK.

This sequence belongs to the adenoviridae histone-like nucleoprotein family. As to quaternary structure, interacts with the core-capsid bridging protein; this interaction bridges the virus core to the capsid. Interacts with host NPM1; this interaction might play a role in placing the pre-histone-like nucleoprotein on the viral DNA or regulating viral gene expression. Interacts with host HMGB1; this interaction inhibits host immune response. Cleaved near the N-terminus by the viral protease during virion maturation to form the mature protein.

It is found in the virion. It localises to the host nucleus. The protein localises to the host nucleolus. In terms of biological role, plays a role in the inhibition of host immune response within the nucleus. Interacts with cellular nucleosomes and immobilizes the host immune danger signal HMGB1 on chromatin. In turn, prevents HMGB1 release out of the cell and thus decreases inflammation. Also plays a role in the wrapping and condensation of the viral DNA. May also promote viral genome import into the nucleus. The sequence is that of Pre-histone-like nucleoprotein from Canine adenovirus serotype 1 (strain CLL) (CAdV-1).